We begin with the raw amino-acid sequence, 360 residues long: Thioredoxin domain-containing protein 15 (360 aa).

The signal sequence occupies residues 1-32 (MVPAAGRRPPRVMRLLGWWQVLLWVLGLPVRG). Residues 33-321 (VEVAEESGRL…GPLPSTLIKS (289 aa)) lie on the Extracellular side of the membrane. Residues 141–173 (PDREEEYYTEPEVAESDAAPTEDSNNTESLKSP) form a disordered region. The segment covering 143 to 155 (REEEYYTEPEVAE) has biased composition (acidic residues). A Thioredoxin domain is found at 153–296 (VAESDAAPTE…LKIFIFNQTG (144 aa)). N187, N194, N206, and N293 each carry an N-linked (GlcNAc...) asparagine glycan. A helical membrane pass occupies residues 322-342 (VDWLLVFSLFFLISFIMYATI). At 343–360 (RTESIRWLIPGQEQEHVE) the chain is on the cytoplasmic side.

It localises to the cell projection. The protein resides in the cilium membrane. Acts as a positive regulator of ciliary hedgehog signaling. Involved in ciliogenesis. In Homo sapiens (Human), this protein is Thioredoxin domain-containing protein 15 (TXNDC15).